The chain runs to 463 residues: Glycine--tRNA ligase (463 aa).

Positions 100 and 175 each coordinate substrate. ATP is bound by residues 207–209 (RNE), 217–222 (FRTREF), 291–292 (EL), and 335–338 (GADR). A substrate-binding site is contributed by 222-226 (FEQME). Position 331-335 (331-335 (EPSLG)) interacts with substrate.

Belongs to the class-II aminoacyl-tRNA synthetase family. In terms of assembly, homodimer.

The protein localises to the cytoplasm. The catalysed reaction is tRNA(Gly) + glycine + ATP = glycyl-tRNA(Gly) + AMP + diphosphate. Catalyzes the attachment of glycine to tRNA(Gly). This is Glycine--tRNA ligase from Clostridium tetani (strain Massachusetts / E88).